A 67-amino-acid polypeptide reads, in one-letter code: MIHKNWLEKETIKKVKCVQTNAKKYIVNRVLTPGKEYEVKNETEEFLFVVDNTNKVGGYYKEYFEEM.

This is an uncharacterized protein from Bacillus subtilis (strain 168).